The primary structure comprises 463 residues: Kynureninase 2 (463 aa).

Residues Leu134, Thr135, 162 to 165 (FPSD), Asp247, His250, and Tyr272 contribute to the pyridoxal 5'-phosphate site. An N6-(pyridoxal phosphate)lysine modification is found at Lys273. Positions 312 and 340 each coordinate pyridoxal 5'-phosphate.

This sequence belongs to the kynureninase family. Homodimer. It depends on pyridoxal 5'-phosphate as a cofactor.

The protein localises to the cytoplasm. The catalysed reaction is L-kynurenine + H2O = anthranilate + L-alanine + H(+). It catalyses the reaction 3-hydroxy-L-kynurenine + H2O = 3-hydroxyanthranilate + L-alanine + H(+). The protein operates within amino-acid degradation; L-kynurenine degradation; L-alanine and anthranilate from L-kynurenine: step 1/1. Its pathway is cofactor biosynthesis; NAD(+) biosynthesis; quinolinate from L-kynurenine: step 2/3. Its function is as follows. Catalyzes the cleavage of L-kynurenine (L-Kyn) and L-3-hydroxykynurenine (L-3OHKyn) into anthranilic acid (AA) and 3-hydroxyanthranilic acid (3-OHAA), respectively. The chain is Kynureninase 2 (bna5-2) from Aspergillus terreus (strain NIH 2624 / FGSC A1156).